A 117-amino-acid polypeptide reads, in one-letter code: Crustacean hyperglycemic hormones 3 (117 aa).

The signal sequence occupies residues 1-24; the sequence is MVTPRMLSALSAVLLLVLTASSSA. 3 disulfides stabilise this stretch: Cys-50-Cys-86, Cys-66-Cys-82, and Cys-69-Cys-95. Val-115 is subject to Valine amide.

The protein belongs to the arthropod CHH/MIH/GIH/VIH hormone family. In terms of tissue distribution, produced by the medulla terminalis X-organ in the eyestalks and transported to the sinus gland where they are stored and released.

It is found in the secreted. Functionally, hormone found in the sinus gland of isopods and decapods which controls the blood sugar level. Has a secretagogue action over the amylase released from the midgut gland. May act as a stress hormone and may be involved in the control of molting and reproduction. The polypeptide is Crustacean hyperglycemic hormones 3 (Penaeus japonicus (Kuruma prawn)).